Consider the following 165-residue polypeptide: Type 3 secretion system regulator YopR (165 aa).

Belongs to the YopR family.

It is found in the secreted. Its function is as follows. May be involved in the regulation of the assembly of the type III secretion system (T3SS), also called injectisome, which is used to inject bacterial effector proteins into eukaryotic host cells. May control the secretion and/or polymerization of YscF/SctF, the principal component of the needle filament, thereby impacting the assembly of the T3SS. Involved in pathogenesis. The polypeptide is Type 3 secretion system regulator YopR (Yersinia pestis).